The primary structure comprises 248 residues: Pyridoxine 5'-phosphate synthase (248 aa).

Asparagine 12 provides a ligand contact to 3-amino-2-oxopropyl phosphate. 14 to 15 (DH) is a 1-deoxy-D-xylulose 5-phosphate binding site. Residue arginine 23 coordinates 3-amino-2-oxopropyl phosphate. Histidine 48 functions as the Proton acceptor in the catalytic mechanism. The 1-deoxy-D-xylulose 5-phosphate site is built by arginine 50 and histidine 55. The active-site Proton acceptor is the glutamate 75. Threonine 105 provides a ligand contact to 1-deoxy-D-xylulose 5-phosphate. Histidine 196 functions as the Proton donor in the catalytic mechanism. Residues glycine 197 and 218 to 219 (GH) contribute to the 3-amino-2-oxopropyl phosphate site.

The protein belongs to the PNP synthase family. In terms of assembly, homooctamer; tetramer of dimers.

The protein localises to the cytoplasm. It carries out the reaction 3-amino-2-oxopropyl phosphate + 1-deoxy-D-xylulose 5-phosphate = pyridoxine 5'-phosphate + phosphate + 2 H2O + H(+). It participates in cofactor biosynthesis; pyridoxine 5'-phosphate biosynthesis; pyridoxine 5'-phosphate from D-erythrose 4-phosphate: step 5/5. Its function is as follows. Catalyzes the complicated ring closure reaction between the two acyclic compounds 1-deoxy-D-xylulose-5-phosphate (DXP) and 3-amino-2-oxopropyl phosphate (1-amino-acetone-3-phosphate or AAP) to form pyridoxine 5'-phosphate (PNP) and inorganic phosphate. The sequence is that of Pyridoxine 5'-phosphate synthase from Pseudomonas aeruginosa (strain UCBPP-PA14).